Reading from the N-terminus, the 349-residue chain is Phosphoribosylformylglycinamidine cyclo-ligase (349 aa).

This sequence belongs to the AIR synthase family.

Its subcellular location is the cytoplasm. It carries out the reaction 2-formamido-N(1)-(5-O-phospho-beta-D-ribosyl)acetamidine + ATP = 5-amino-1-(5-phospho-beta-D-ribosyl)imidazole + ADP + phosphate + H(+). It functions in the pathway purine metabolism; IMP biosynthesis via de novo pathway; 5-amino-1-(5-phospho-D-ribosyl)imidazole from N(2)-formyl-N(1)-(5-phospho-D-ribosyl)glycinamide: step 2/2. This chain is Phosphoribosylformylglycinamidine cyclo-ligase, found in Trichlorobacter lovleyi (strain ATCC BAA-1151 / DSM 17278 / SZ) (Geobacter lovleyi).